A 156-amino-acid chain; its full sequence is Ribosomal RNA large subunit methyltransferase H (156 aa).

S-adenosyl-L-methionine-binding positions include Leu-72, Gly-104, and 123 to 128; that span reads LGPMTF.

The protein belongs to the RNA methyltransferase RlmH family. Homodimer.

The protein localises to the cytoplasm. The enzyme catalyses pseudouridine(1915) in 23S rRNA + S-adenosyl-L-methionine = N(3)-methylpseudouridine(1915) in 23S rRNA + S-adenosyl-L-homocysteine + H(+). In terms of biological role, specifically methylates the pseudouridine at position 1915 (m3Psi1915) in 23S rRNA. The polypeptide is Ribosomal RNA large subunit methyltransferase H (Nitratidesulfovibrio vulgaris (strain ATCC 29579 / DSM 644 / CCUG 34227 / NCIMB 8303 / VKM B-1760 / Hildenborough) (Desulfovibrio vulgaris)).